The chain runs to 121 residues: Non-structural protein 8 (121 aa).

The first 15 residues, M1 to C15, serve as a signal peptide directing secretion. The SARS ORF8 Ig-like domain maps to E19–I121. Cystine bridges form between C25/C90, C37/C102, and C61/C83.

The polypeptide is Non-structural protein 8 (Rhinolophus macrotis (Big-eared horseshoe bat)).